The primary structure comprises 272 residues: Troponin T, fast skeletal muscle (272 aa).

Residues 1 to 50 (MSDEETEQVEEQYEEEEEAQEEEVQEEAPEPEEVQEDAVAEEEREEDEEE) are compositionally biased toward acidic residues. The interval 1–75 (MSDEETEQVE…EKVDFDDIQK (75 aa)) is disordered. Ser-2 carries the post-translational modification N-acetylserine. Ser-2 is subject to Phosphoserine. Positions 63–75 (PEGEKVDFDDIQK) are enriched in basic and acidic residues. Position 91 is a phosphoserine (Ser-91). Residues 114–156 (RAERAEQQRIRAEKEREPQNRLAEEKARREEEDAKRRAEDDMK) are compositionally biased toward basic and acidic residues. A disordered region spans residues 114 to 193 (RAERAEQQRI…TAREMKKKIL (80 aa)). Ser-162, Ser-169, and Ser-170 each carry phosphoserine. The segment covering 184–193 (TAREMKKKIL) has biased composition (basic and acidic residues). A Phosphoserine modification is found at Ser-206. Tyr-222 is subject to Phosphotyrosine. Residues 248-272 (RIDQAQKHSKKAGATAKGKVGGRWK) are disordered.

It belongs to the troponin T family. As to expression, expressed predominantly in skeletal muscle.

Its function is as follows. Troponin T is the tropomyosin-binding subunit of troponin, the thin filament regulatory complex which confers calcium-sensitivity to striated muscle actomyosin ATPase activity. This is Troponin T, fast skeletal muscle (Tnnt3) from Mus musculus (Mouse).